We begin with the raw amino-acid sequence, 196 residues long: Urease accessory protein UreE (196 aa).

The segment at 150-196 (RGAYSGGHDHGHAHAHSHAEAHSHAHGESHSHSHSHSHDDHHHHDHD) is disordered. Basic and acidic residues predominate over residues 156–196 (GHDHGHAHAHSHAEAHSHAHGESHSHSHSHSHDDHHHHDHD).

It belongs to the UreE family.

It is found in the cytoplasm. Its function is as follows. Involved in urease metallocenter assembly. Binds nickel. Probably functions as a nickel donor during metallocenter assembly. This chain is Urease accessory protein UreE, found in Mesorhizobium japonicum (strain LMG 29417 / CECT 9101 / MAFF 303099) (Mesorhizobium loti (strain MAFF 303099)).